A 196-amino-acid chain; its full sequence is Small ribosomal subunit protein uS4c (196 aa).

Residues 1 to 14 are compositionally biased toward basic residues; that stretch reads MSRYRGPRLKKIRR. A disordered region spans residues 1 to 43; the sequence is MSRYRGPRLKKIRRLGALPGLTRKTPKSGSNPKKKFHSGKKEQ. The S4 RNA-binding domain occupies 89–169; the sequence is MRLDNILFRL…LPKHLTIDTL (81 aa).

This sequence belongs to the universal ribosomal protein uS4 family. As to quaternary structure, part of the 30S ribosomal subunit. Contacts protein S5. The interaction surface between S4 and S5 is involved in control of translational fidelity.

The protein resides in the plastid. Its subcellular location is the chloroplast. In terms of biological role, one of the primary rRNA binding proteins, it binds directly to 16S rRNA where it nucleates assembly of the body of the 30S subunit. Its function is as follows. With S5 and S12 plays an important role in translational accuracy. In Melica uniflora (Wood melick grass), this protein is Small ribosomal subunit protein uS4c (rps4).